Consider the following 202-residue polypeptide: 3-isopropylmalate dehydratase small subunit 1 (202 aa).

Belongs to the LeuD family. LeuD type 1 subfamily. Heterodimer of LeuC and LeuD.

The enzyme catalyses (2R,3S)-3-isopropylmalate = (2S)-2-isopropylmalate. The protein operates within amino-acid biosynthesis; L-leucine biosynthesis; L-leucine from 3-methyl-2-oxobutanoate: step 2/4. Its function is as follows. Catalyzes the isomerization between 2-isopropylmalate and 3-isopropylmalate, via the formation of 2-isopropylmaleate. This chain is 3-isopropylmalate dehydratase small subunit 1, found in Bordetella pertussis (strain Tohama I / ATCC BAA-589 / NCTC 13251).